We begin with the raw amino-acid sequence, 724 residues long: Polyribonucleotide nucleotidyltransferase (724 aa).

Mg(2+)-binding residues include aspartate 488 and aspartate 494. One can recognise a KH domain in the interval 555–614; that stretch reads PRMITVKINPEKIRDVIGKGGSTIQALTKETGCTIDIGEDGTITIASTSSEGMAEAKRRI. The 69-residue stretch at 624-692 folds into the S1 motif domain; the sequence is GKIYNGTVLK…EKGRMRLSIK (69 aa). Residues 697–724 form a disordered region; the sequence is EEGDVPVAAPQAPGAGDAASQQQQQQQQ. Low complexity predominate over residues 701–724; the sequence is VPVAAPQAPGAGDAASQQQQQQQQ.

It belongs to the polyribonucleotide nucleotidyltransferase family. The cofactor is Mg(2+).

The protein localises to the cytoplasm. It catalyses the reaction RNA(n+1) + phosphate = RNA(n) + a ribonucleoside 5'-diphosphate. Functionally, involved in mRNA degradation. Catalyzes the phosphorolysis of single-stranded polyribonucleotides processively in the 3'- to 5'-direction. The protein is Polyribonucleotide nucleotidyltransferase of Ralstonia pickettii (strain 12J).